A 504-amino-acid chain; its full sequence is Tachykinin-like peptides receptor 86C (504 aa).

Residues 1–84 (MSEIVDTELL…PYELPWEQKT (84 aa)) are Extracellular-facing. N-linked (GlcNAc...) asparagine glycosylation is found at asparagine 12, asparagine 28, and asparagine 36. A helical transmembrane segment spans residues 85–108 (IWAIIFGLMMFVAIAGNGIVLWIV). The Cytoplasmic portion of the chain corresponds to 109–118 (TGHRSMRTVT). Residues 119–143 (NYFLLNLSIADLLMSSLNCVFNFIF) traverse the membrane as a helical segment. Over 144-155 (MLNSDWPFGSIY) the chain is Extracellular. The chain crosses the membrane as a helical span at residues 156–179 (CTINNFVANVTVSTSVFTLVAISF). Topologically, residues 180–199 (DRYIAIVHPLKRRTSRRKVR) are cytoplasmic. Residues 200–224 (IILVLIWALSCVLSAPCLLYSSIMT) traverse the membrane as a helical segment. Topologically, residues 225-250 (KHYYNGKSRTVCFMMWPDGRYPTSMA) are extracellular. The helical transmembrane segment at 251-275 (DYAYNLIILVLTYGIPMIVMLICYS) threads the bilayer. At 276-308 (LMGRVLWGSRSIGENTDRQMESMKSKRKVVRMF) the chain is on the cytoplasmic side. Residues 309-330 (IAIVSIFAICWLPYHLFFIYAY) form a helical membrane-spanning segment. Residues 331–343 (HNNQVASTKYVQH) are Extracellular-facing. A helical membrane pass occupies residues 344 to 367 (MYLGFYWLAMSNAMVNPLIYYWMN). Over 368-504 (KRFRMYFQRI…NPVELSPKQM (137 aa)) the chain is Cytoplasmic. The interval 393 to 450 (PKSRLTNKNSSNRHTRAETKSQWKRSTMETQIQQAPVTSSCREQRSAQQQQPPGSGTN) is disordered. Composition is skewed to polar residues over residues 395–404 (SRLTNKNSSN) and 416–450 (KRSTMETQIQQAPVTSSCREQRSAQQQQPPGSGTN).

Belongs to the G-protein coupled receptor 1 family. Expressed in central nervous system, as well as in subsets of neurons in each segment of the developing ventral ganglia.

It localises to the cell membrane. Receptor for tachykinin-like peptides. This is Tachykinin-like peptides receptor 86C (TkR86C) from Drosophila melanogaster (Fruit fly).